Consider the following 126-residue polypeptide: Fluoride-specific ion channel FluC 2 (126 aa).

4 helical membrane passes run 11 to 31 (IFLI…LCEL), 34 to 54 (GQLG…MIMY), 66 to 86 (GKIA…TFAV), and 93 to 113 (FIPA…GVFF). 2 residues coordinate Na(+): Gly76 and Thr79.

The protein belongs to the fluoride channel Fluc/FEX (TC 1.A.43) family.

It is found in the cell membrane. The enzyme catalyses fluoride(in) = fluoride(out). Its activity is regulated as follows. Na(+) is not transported, but it plays an essential structural role and its presence is essential for fluoride channel function. Fluoride-specific ion channel. Important for reducing fluoride concentration in the cell, thus reducing its toxicity. This chain is Fluoride-specific ion channel FluC 2, found in Methanosarcina acetivorans (strain ATCC 35395 / DSM 2834 / JCM 12185 / C2A).